Consider the following 689-residue polypeptide: Beta-adrenergic receptor kinase 1 (689 aa).

The N-terminal stretch occupies residues 1 to 190 (MADLEAVLAD…ELNIHLTMND (190 aa)). The RGS domain maps to 54 to 175 (TFEKIFSQKL…IESDKFTRFC (122 aa)). One can recognise a Protein kinase domain in the interval 191 to 453 (FSVHRIIGRG…AQEIKESPFF (263 aa)). Residues 197 to 205 (IGRGGFGEV) and Lys220 contribute to the ATP site. The active-site Proton acceptor is Asp317. Positions 454–521 (RSLDWQMVFL…TISERWQQEV (68 aa)) constitute an AGC-kinase C-terminal domain. The 95-residue stretch at 558–652 (DCIMHGYMSK…WKKELRDAYR (95 aa)) folds into the PH domain. Ser670 carries the post-translational modification Phosphoserine.

It belongs to the protein kinase superfamily. AGC Ser/Thr protein kinase family. GPRK subfamily. In terms of assembly, interacts with the heterodimer formed by GNB1 and GNG2. Interacts with GIT1. Interacts with, and phosphorylates chemokine-stimulated CCR5. Interacts with ARRB1. Interacts with LPAR1 and LPAR2. Interacts with RALA in response to LPAR1 activation. ADRBK1 and RALA mutually inhibit each other's binding to LPAR1. Interacts with ADRB2. In terms of tissue distribution, expressed at low levels in brain cortex, hippocampus, striatum, hypothalamus, cerebellum and brainstem (at protein level).

The protein localises to the cytoplasm. It is found in the cell membrane. It localises to the postsynapse. Its subcellular location is the presynapse. The catalysed reaction is [beta-adrenergic receptor] + ATP = [beta-adrenergic receptor]-phosphate + ADP + H(+). Its activity is regulated as follows. In contrast to other AGC family kinases, the catalytic activity is solely regulated by the binding of substrates and ligands, not by phosphorylation of the kinase domain. Its function is as follows. Specifically phosphorylates the agonist-occupied form of the beta-adrenergic and closely related receptors, probably inducing a desensitization of them. Key regulator of LPAR1 signaling. Competes with RALA for binding to LPAR1 thus affecting the signaling properties of the receptor. Desensitizes LPAR1 and LPAR2 in a phosphorylation-independent manner. Positively regulates ciliary smoothened (SMO)-dependent Hedgehog (Hh) signaling pathway by facilitating the trafficking of SMO into the cilium and the stimulation of SMO activity. Inhibits relaxation of airway smooth muscle in response to blue light. The protein is Beta-adrenergic receptor kinase 1 of Rattus norvegicus (Rat).